We begin with the raw amino-acid sequence, 533 residues long: Tyrosine protein-kinase src-1 (533 aa).

The N-myristoyl glycine moiety is linked to residue glycine 2. Residues 71–132 (QERETLVALY…PRNFVAKQQT (62 aa)) enclose the SH3 domain. One can recognise an SH2 domain in the interval 138-237 (WYAGKIPRNR…GLCCQLTFPA (100 aa)). Residues 262–521 (LHLKRKLGDG…TLYHFFDDYF (260 aa)) form the Protein kinase domain. Residues 268–276 (LGDGNFGEV) and lysine 290 contribute to the ATP site. Aspartate 381 acts as the Proton acceptor in catalysis. At tyrosine 416 the chain carries Phosphotyrosine; by autocatalysis. Residue tyrosine 528 is modified to Phosphotyrosine.

This sequence belongs to the protein kinase superfamily. Tyr protein kinase family. SRC subfamily. As to quaternary structure, interacts (via SH2 domain and SH3 domain) with unc-5 (via cytoplasmic domain); the interaction requires kinase activity. Interacts (when activated and phosphorylated at 'Tyr-416') with ina-1 (via cytoplasmic domain) and with ced-2 (via SH2 domain). The cofactor is Mg(2+). Mn(2+) is required as a cofactor. Post-translationally, may be phosphorylated on Tyr-528 by csk-1. Expressed in some neurons (ASE, ADF, AVA, AUA, RMDV and BAG) in the head region, anchor cell, vulva, cells around anus, body wall muscle, pharyngeal muscles in procorpus and metacorpus. Expressed in gonadal distal tip cells.

The protein localises to the cell membrane. It localises to the cell projection. It is found in the phagocytic cup. The enzyme catalyses L-tyrosyl-[protein] + ATP = O-phospho-L-tyrosyl-[protein] + ADP + H(+). Its activity is regulated as follows. May be activated by autophosphorylation. May be inhibited by csk-1-mediated phosphorylation. Its function is as follows. Non-receptor tyrosine-protein kinase which plays a role in endoderm development by controlling spindle orientation in EMS blastomere, probably downstream of receptor mes-1. Also involved in embryonic body morphogenesis, especially in the formation of the pharynx and the intestine. May be dispensable for pharyngeal muscle organization in the adult. Probably phosphorylates netrin receptor unc-5, to regulate distal tip cell (DTC) migration during gonad development and in axon repulsion. Plays a role in the migration of the QR neuroblast, a precursor of the AVM neuron, and in the migration of the axon cone of AVM, ALM, CAN and PVM neurons. May act downstream of migratory protein mig-13 to control AVM neuron migration. Probably downstream of integrin ina-1/pat-3, plays a role in the clearance of apoptotic cells during mid-embryogenesis. Phosphorylates ced-1 at 'Tyr-1019' which promotes ced-1 proteasomal degradation, maintaining appropriate ced-1 levels for apoptotic cell clearance. This Caenorhabditis elegans protein is Tyrosine protein-kinase src-1.